The following is a 131-amino-acid chain: Photosystem II reaction center Psb28 protein (131 aa).

Residues 110–131 (NGLGYSQNQKSDQTDAATEEQA) are disordered. Residues 112–125 (LGYSQNQKSDQTDA) show a composition bias toward polar residues.

The protein belongs to the Psb28 family. As to quaternary structure, part of the photosystem II complex.

The protein localises to the cellular thylakoid membrane. This Synechococcus sp. (strain CC9902) protein is Photosystem II reaction center Psb28 protein.